Reading from the N-terminus, the 236-residue chain is Aminopyrimidine aminohydrolase (236 aa).

Residue aspartate 44 coordinates substrate. Cysteine 135 acts as the Nucleophile in catalysis. Residues tyrosine 139 and tyrosine 163 each contribute to the substrate site. Residue glutamate 205 is the Proton donor of the active site.

Belongs to the TenA family. Homotetramer.

It catalyses the reaction 4-amino-5-aminomethyl-2-methylpyrimidine + H2O = 4-amino-5-hydroxymethyl-2-methylpyrimidine + NH4(+). The enzyme catalyses thiamine + H2O = 5-(2-hydroxyethyl)-4-methylthiazole + 4-amino-5-hydroxymethyl-2-methylpyrimidine + H(+). It participates in cofactor biosynthesis; thiamine diphosphate biosynthesis. In terms of biological role, catalyzes an amino-pyrimidine hydrolysis reaction at the C5' of the pyrimidine moiety of thiamine compounds, a reaction that is part of a thiamine salvage pathway. Thus, catalyzes the conversion of 4-amino-5-aminomethyl-2-methylpyrimidine to 4-amino-5-hydroxymethyl-2-methylpyrimidine (HMP). To a lesser extent, is also able to catalyze the hydrolytic cleavage of thiamine; however, this thiaminase activity is unlikely to be physiologically relevant. Therefore, is involved in the regeneration of the thiamine pyrimidine from thiamine degraded products present in the environment, rather than in thiamine degradation. The polypeptide is Aminopyrimidine aminohydrolase (Bacillus subtilis (strain 168)).